Consider the following 145-residue polypeptide: D-aminoacyl-tRNA deacylase (145 aa).

A Gly-cisPro motif, important for rejection of L-amino acids motif is present at residues 137-138; it reads GP.

The protein belongs to the DTD family. As to quaternary structure, homodimer.

The protein resides in the cytoplasm. It catalyses the reaction glycyl-tRNA(Ala) + H2O = tRNA(Ala) + glycine + H(+). It carries out the reaction a D-aminoacyl-tRNA + H2O = a tRNA + a D-alpha-amino acid + H(+). Its function is as follows. An aminoacyl-tRNA editing enzyme that deacylates mischarged D-aminoacyl-tRNAs. Also deacylates mischarged glycyl-tRNA(Ala), protecting cells against glycine mischarging by AlaRS. Acts via tRNA-based rather than protein-based catalysis; rejects L-amino acids rather than detecting D-amino acids in the active site. By recycling D-aminoacyl-tRNA to D-amino acids and free tRNA molecules, this enzyme counteracts the toxicity associated with the formation of D-aminoacyl-tRNA entities in vivo and helps enforce protein L-homochirality. The polypeptide is D-aminoacyl-tRNA deacylase (Legionella pneumophila (strain Lens)).